The sequence spans 300 residues: Secreted mono- and diacylglycerol lipase LIP4 (300 aa).

An N-terminal signal peptide occupies residues 1-16 (MRFLAFLLCLVPLALC). C54 and C293 form a disulfide bridge. S167 (nucleophile) is an active-site residue. Residue D224 is part of the active site.

This sequence belongs to the AB hydrolase superfamily. Lipase family. Class 3 subfamily.

It is found in the secreted. It catalyses the reaction a monoacylglycerol + H2O = glycerol + a fatty acid + H(+). It carries out the reaction a diacylglycerol + H2O = a monoacylglycerol + a fatty acid + H(+). Its function is as follows. Secreted lipase involved in Dandruff and seborrheic dermatitis (D/SD) probably via lipase-mediated breakdown of sebaceous lipids and release of irritating free fatty acids. Shows activity against monoglyceride and diglyceride substrates. Due to an absence of fatty acid synthase genes in Malassezia species, secretory lipases are essential for the yeast to generate free fatty acids from degradation of sebum and assimilate them as lipid sources for growth. Plays an essential role at the pathogen-host interface during disease progression. The polypeptide is Secreted mono- and diacylglycerol lipase LIP4 (Malassezia restricta (Seborrheic dermatitis infection agent)).